The primary structure comprises 319 residues: Mas-related G-protein coupled receptor member D (319 aa).

At 1-30 the chain is on the extracellular side; sequence MNYTPYSSPAPGLTISPTMDPVTWVYFSVT. Residues 31-51 form a helical membrane-spanning segment; sequence FLAMATCVCGIVGNSMVIWLL. The Cytoplasmic portion of the chain corresponds to 52–64; that stretch reads SFHRVQRSPFCTY. A helical transmembrane segment spans residues 65–85; that stretch reads VLNLAVADLLFLLCMASLLSL. The Extracellular segment spans residues 86–92; sequence ETGPLLT. The helical transmembrane segment at 93 to 113 threads the bilayer; the sequence is ASTSARVYEGMKRIKYFAYTA. The Cytoplasmic segment spans residues 114-144; it reads GLSLLTAISTQRCLSVLFPIWYKCHRPQHLS. Residues 145–165 form a helical membrane-spanning segment; sequence GVVCGVLWALALLMNFLASFF. Residues 166–184 are Extracellular-facing; sequence CVQFWHPDKYQCFKVDMVF. Residues 185-205 traverse the membrane as a helical segment; that stretch reads NSLILGIFMPVMVLTSAIIFI. Residues 206–220 lie on the Cytoplasmic side of the membrane; that stretch reads RMRKNSLLQRRQPRR. Residues 221–241 form a helical membrane-spanning segment; that stretch reads LYVVILTSVLVFLTCSLPLGI. Residues 242 to 260 are Extracellular-facing; the sequence is NWFLLYWVELPQAVRLLYV. Residues 261-281 form a helical membrane-spanning segment; it reads CSSRFSSSLSSSANPVIYFLV. Residues 282–319 lie on the Cytoplasmic side of the membrane; it reads GSQKSHRLQESLGAVLGRALQDEPEGRETPSTCTNDGV.

The protein belongs to the G-protein coupled receptor 1 family. Mas subfamily. Co-expressed in the small diameter neurons with P2X3 and VR1 in dorsal root ganglia.

It is found in the cell membrane. Functionally, may regulate nociceptor function and/or development, including the sensation or modulation of pain. Functions as a specific membrane receptor for beta-alanine. The receptor couples with G-protein G(q) and G(i). The protein is Mas-related G-protein coupled receptor member D (Mrgprd) of Rattus norvegicus (Rat).